Reading from the N-terminus, the 325-residue chain is MESGAENQQSGDAAVTEAESQQMTVQAQPQIATLAQVSMPAAHATSSAPTVTLVQLPNGQTVQVHGVIQAAQPSVIQSPQVQTVQISTIAESEDSQESVDSVTDSQKRREILSRRPSYRKILNDLSSDAPGVPRIEEEKSEEETSAPAITTVTVPTPIYQTSSGQYIAITQGGAIQLANNGTDGVQGLQTLTMTNAAATQPGTTILQYAQTTDGQQILVPSNQVVVQAASGDVQTYQIRTAPTSTIAPGVVMASSPALPTQPAEEAARKREVRLMKNREAARECRRKKKEYVKCLENRVAVLENQNKTLIEELKALKDLYCHKSD.

Polar residues-rich tracts occupy residues 1–11 (MESGAENQQSG) and 18–27 (AESQQMTVQA). Disordered stretches follow at residues 1 to 27 (MESG…TVQA) and 92 to 111 (SEDS…RREI). Residues 85–144 (QISTIAESEDSQESVDSVTDSQKRREILSRRPSYRKILNDLSSDAPGVPRIEEEKSEEET) enclose the KID domain. Ser-117 is subject to Phosphoserine; by CaMK1, CaMK2, CaMK4, PKB/AKT1 or PKB/AKT2, RPS6KA3, RPS6KA4, RPS6KA5 and SGK1. Residue Lys-120 forms a Glycyl lysine isopeptide (Lys-Gly) (interchain with G-Cter in SUMO2) linkage. Residues 124–146 (DLSSDAPGVPRIEEEKSEEETSA) are disordered. Ser-126 carries the phosphoserine; by CaMK2 modification. The residue at position 255 (Ser-255) is a Phosphoserine; by HIPK2. In terms of domain architecture, bZIP spans 267-325 (ARKREVRLMKNREAARECRRKKKEYVKCLENRVAVLENQNKTLIEELKALKDLYCHKSD). A basic motif region spans residues 268–293 (RKREVRLMKNREAARECRRKKKEYVK). Glycyl lysine isopeptide (Lys-Gly) (interchain with G-Cter in SUMO1) cross-links involve residues Lys-269 and Lys-288. The interval 295–316 (LENRVAVLENQNKTLIEELKAL) is leucine-zipper.

It belongs to the bZIP family. Interacts with PPRC1. Binds DNA as a dimer. This dimer is stabilized by magnesium ions. Interacts, through the bZIP domain, with the coactivators CRTC1/TORC1, CRTC2/TORC2 and CRTC3/TORC3. When phosphorylated on Ser-117, binds CREBBP. Interacts with CREBL2; regulates CREB1 phosphorylation, stability and transcriptional activity. Interacts (phosphorylated form) with TOX3. Interacts with ARRB1. Binds to HIPK2. Interacts with SGK1. Interacts with TSSK4; this interaction facilitates phosphorylation on Ser-117. Forms a complex with KMT2A and CREBBP. Interacts with TOX4; CREB1 is required for full induction of TOX4-dependent activity and the interaction is increased by cAMP and inhibited by insulin. Sumoylated with SUMO1. Sumoylation on Lys-288, but not on Lys-269, is required for nuclear localization of this protein. Sumoylation is enhanced under hypoxia, promoting nuclear localization and stabilization. Post-translationally, stimulated by phosphorylation. Phosphorylation of both Ser-117 and Ser-126 in the SCN regulates the activity of CREB and participates in circadian rhythm generation. Phosphorylation of Ser-117 allows CREBBP binding. Phosphorylated upon calcium influx by CaMK4 and CaMK2 on Ser-117. CaMK4 is much more potent than CaMK2 in activating CREB. Phosphorylated by CaMK2 on Ser-126. Phosphorylation of Ser-126 blocks CREB-mediated transcription even when Ser-117 is phosphorylated. Phosphorylated by CaMK1. Phosphorylation of Ser-255 by HIPK2 in response to genotoxic stress promotes CREB1 activity, facilitating the recruitment of the coactivator CBP. Phosphorylated at Ser-117 by RPS6KA3, RPS6KA4 and RPS6KA5 in response to mitogenic or stress stimuli. CREBL2 positively regulates phosphorylation at Ser-117 thereby stimulating CREB1 transcriptional activity. In liver, phosphorylation is induced by fasting or glucagon in a circadian fashion. Phosphorylated by TSSK4 on Ser-117.

The protein localises to the nucleus. Phosphorylation-dependent transcription factor that stimulates transcription upon binding to the DNA cAMP response element (CRE), a sequence present in many viral and cellular promoters. Transcription activation is enhanced by the TORC coactivators which act independently of Ser-117 phosphorylation. Involved in different cellular processes including the synchronization of circadian rhythmicity and the differentiation of adipose cells. Regulates the expression of apoptotic and inflammatory response factors in cardiomyocytes in response to ERFE-mediated activation of AKT signaling. The protein is Cyclic AMP-responsive element-binding protein 1 (CREB1) of Bos taurus (Bovine).